The sequence spans 356 residues: Tyrosine recombinase XerS (356 aa).

The Core-binding (CB) domain maps to 16–121 (IMPWYVLDYY…ALSSLYKYLT (106 aa)). Residues 169 to 354 (AFLDYVDKEY…VNDEQKNALD (186 aa)) form the Tyr recombinase domain. Residues arginine 210, lysine 234, histidine 306, arginine 309, and histidine 332 contribute to the active site. Tyrosine 341 serves as the catalytic O-(3'-phospho-DNA)-tyrosine intermediate.

The protein belongs to the 'phage' integrase family. XerS subfamily.

It is found in the cytoplasm. Its activity is regulated as follows. FtsK is required for recombination. Its function is as follows. Site-specific tyrosine recombinase, which acts by catalyzing the cutting and rejoining of the recombining DNA molecules. Essential to convert dimers of the bacterial chromosome into monomers to permit their segregation at cell division. The polypeptide is Tyrosine recombinase XerS (Streptococcus pyogenes serotype M6 (strain ATCC BAA-946 / MGAS10394)).